We begin with the raw amino-acid sequence, 1755 residues long: E3 ubiquitin-protein ligase UBR2 (1755 aa).

An N-acetylalanine modification is found at Ala-2. Residue Lys-94 forms a Glycyl lysine isopeptide (Lys-Gly) (interchain with G-Cter in ubiquitin) linkage. Residues 97–168 (HLCGRVFKVG…EGPYCQKHKL (72 aa)) form a UBR-type zinc finger. Residues Cys-99, Cys-112, Cys-115, Cys-124, Cys-127, His-133, and His-136 each contribute to the Zn(2+) site. Residue Phe-148 coordinates a peptide. A Zn(2+)-binding site is contributed by Cys-149. Asp-150 lines the a peptide pocket. Residue Cys-151 participates in Zn(2+) binding. Residue Asp-153 coordinates a peptide. A Glycyl lysine isopeptide (Lys-Gly) (interchain with G-Cter in ubiquitin) cross-link involves residue Lys-158. Cys-163 contributes to the Zn(2+) binding site. A Glycyl lysine isopeptide (Lys-Gly) (interchain with G-Cter in ubiquitin) cross-link involves residue Lys-165. His-166 is a binding site for Zn(2+). Glycyl lysine isopeptide (Lys-Gly) (interchain with G-Cter in ubiquitin) cross-links involve residues Lys-248, Lys-255, and Lys-470. Ser-476 is subject to Phosphoserine. Residues Lys-488, Lys-568, Lys-779, and Lys-789 each participate in a glycyl lysine isopeptide (Lys-Gly) (interchain with G-Cter in ubiquitin) cross-link. The segment at 1012 to 1033 (AEAEGTIMEESSRDKDKAERKR) is disordered. A coiled-coil region spans residues 1019–1054 (MEESSRDKDKAERKRKAEIARLRREKIMAQMSEMQR). The span at 1021–1033 (ESSRDKDKAERKR) shows a compositional bias: basic and acidic residues. Residues Cys-1108, Cys-1111, Cys-1168, His-1170, His-1173, Cys-1176, Cys-1210, and Cys-1213 each coordinate Zn(2+). Residues 1108–1214 (CILCQEEQEV…NGEFLCPLCE (107 aa)) form an RING-type; atypical zinc finger. Residues Lys-1496, Lys-1599, and Lys-1689 each participate in a glycyl lysine isopeptide (Lys-Gly) (interchain with G-Cter in ubiquitin) cross-link. At Ser-1694 the chain carries Phosphoserine. Tyr-1697 is modified (phosphotyrosine).

This sequence belongs to the E3 ubiquitin-protein ligase UBR1-like family. As to quaternary structure, interacts with UBE2B; promotes the UBE2B-H2A interaction and the ubiquitination of histone H2A by UBE2B and UBR2. Interacts with RECQL4. Interacts with Tex19.1 and Tex19.2; does not lead to Tex19.1 degradation and stabilizes it. Interacts with L1RE1. Interacts with CASP8. Interacts with ATXN3. Interacts with UBE2O. Dephosphorylated by DUSP22 at Ser-1694 and Tyr-1697, leading to subsequent ubiquitination and proteasomal degradation. Post-translationally, 'Lys-48'-linked ubiquitinated at Lys-94, Lys-779 and Lys-1599 following DUSP22-mediated dephosphorylation of Ser-1694 and Tyr-1697 which promotes UBR2 interaction with the SCF(FBW1A) E3 ubiquitin-protein ligase complex. In terms of tissue distribution, highly expressed in skeletal muscle. Also expressed in heart, kidney and testis. Expressed in acinar cells of the pancreas. In testes, expressed primarily in spermatocytes. Expressed in cerebellum.

It is found in the nucleus. The protein resides in the chromosome. The catalysed reaction is S-ubiquitinyl-[E2 ubiquitin-conjugating enzyme]-L-cysteine + [acceptor protein]-L-lysine = [E2 ubiquitin-conjugating enzyme]-L-cysteine + N(6)-ubiquitinyl-[acceptor protein]-L-lysine.. It participates in protein modification; protein ubiquitination. Its function is as follows. E3 ubiquitin-protein ligase which is a component of the N-end rule pathway. Recognizes and binds to proteins bearing specific N-terminal residues (N-degrons) that are destabilizing according to the N-end rule, leading to their ubiquitination and subsequent degradation. Recognizes both type-1 and type-2 N-degrons, containing positively charged amino acids (Arg, Lys and His) and bulky and hydrophobic amino acids, respectively. Does not ubiquitinate proteins that are acetylated at the N-terminus. In contrast, it strongly binds methylated N-degrons. Plays a critical role in chromatin inactivation and chromosome-wide transcriptional silencing during meiosis via ubiquitination of histone H2A. Binds leucine and is a negative regulator of the leucine-mTOR signaling pathway, thereby controlling cell growth. Required for spermatogenesis, promotes, with Tex19.1, SPO11-dependent recombination foci to accumulate and drive robust homologous chromosome synapsis. Polyubiquitinates LINE-1 retrotransposon encoded, LIRE1, which induces degradation, inhibiting LINE-1 retrotransposon mobilization. Catalyzes ubiquitination and degradation of the N-terminal part of NLRP1B following NLRP1B activation by pathogens and other damage-associated signals: ubiquitination promotes degradation of the N-terminal part and subsequent release of the cleaved C-terminal part of NLRP1B, which polymerizes and forms the NLRP1B inflammasome followed by host cell pyroptosis. Plays a role in T-cell receptor signaling by inducing 'Lys-63'-linked ubiquitination of lymphocyte cell-specific kinase LCK. This activity is regulated by DUSP22, which induces 'Lys-48'-linked ubiquitination of UBR2, leading to its proteasomal degradation by SCF E3 ubiquitin-protein ligase complex. In Mus musculus (Mouse), this protein is E3 ubiquitin-protein ligase UBR2.